Here is a 195-residue protein sequence, read N- to C-terminus: MAATTAAAAVPGVVRAERLLRGGCVVMAATAALLLGFSAETKTVLFVRKTAVAKDVQALWVLTVAAAAAAGYQFAQLVRCMYCSSSGDAGAMAVAWTSFLLDKGCAYVVFASTAAALQACMVGLIGVEALQWSKLCNIYTRFCEQAAAGMLCSFLAAAGMAVLSAFSARRLFRLYSPAGHRRSCPRAAVLATSPH.

The Cytoplasmic portion of the chain corresponds to Met-1–Arg-18. A helical transmembrane segment spans residues Leu-19–Ala-39. The Extracellular segment spans residues Glu-40–Gln-57. A helical transmembrane segment spans residues Ala-58–Val-78. The Cytoplasmic segment spans residues Arg-79–Ala-106. A helical transmembrane segment spans residues Tyr-107–Val-127. Topologically, residues Glu-128–Gln-145 are extracellular. The chain crosses the membrane as a helical span at residues Ala-146–Phe-166. The Cytoplasmic segment spans residues Ser-167–His-195.

The protein belongs to the Casparian strip membrane proteins (CASP) family. Homodimer and heterodimers.

Its subcellular location is the cell membrane. The polypeptide is CASP-like protein 2C2 (Oryza sativa subsp. japonica (Rice)).